A 235-amino-acid chain; its full sequence is Protein GMH1 homolog (235 aa).

Residues 1–54 (MSRSFRNGFRLLKLSQMDFERAWWDMANLFRAPRRVYRSITLRKQNINRYGRED) lie on the Cytoplasmic side of the membrane. A helical membrane pass occupies residues 55–75 (FSFIVLFSCMIVISALLWALF). Residues 76–88 (YMNTPKGYVTTIT) lie on the Lumenal side of the membrane. The helical transmembrane segment at 89 to 109 (FMLFVDFGAVGVIMATMYYFI) threads the bilayer. The Cytoplasmic segment spans residues 110–140 (AKRFLMKSNDTILSSTDYQLEWNYCFDVHCN). The chain crosses the membrane as a helical span at residues 141–161 (SFFPSFVLLYVIQLFLLPVIT). Topologically, residues 162–175 (RDNFISLFMGNTLY) are lumenal. Residues 176-196 (LVALCYYSYLTFIGYQILPFL) traverse the membrane as a helical segment. Residues 197 to 201 (KNTHA) lie on the Cytoplasmic side of the membrane. A helical membrane pass occupies residues 202–222 (LLLPIPMFFIMWALSLLGFNV). The Lumenal segment spans residues 223-235 (PKHVVDVYFGKSA).

The protein belongs to the unc-50 family.

Its subcellular location is the endoplasmic reticulum membrane. Functionally, has a role in meiosis. The sequence is that of Protein GMH1 homolog (mug16) from Schizosaccharomyces pombe (strain 972 / ATCC 24843) (Fission yeast).